Consider the following 192-residue polypeptide: Protein GrpE (192 aa).

Basic and acidic residues predominate over residues 1 to 20; sequence MEERNEQVVEEVKEEVKEAQ. Residues 1-39 form a disordered region; sequence MEERNEQVVEEVKEEVKEAQVEEAVTSEDSEESVEEKSE. Over residues 25–34 the composition is skewed to acidic residues; it reads VTSEDSEESV.

This sequence belongs to the GrpE family. In terms of assembly, homodimer.

The protein resides in the cytoplasm. Participates actively in the response to hyperosmotic and heat shock by preventing the aggregation of stress-denatured proteins, in association with DnaK and GrpE. It is the nucleotide exchange factor for DnaK and may function as a thermosensor. Unfolded proteins bind initially to DnaJ; upon interaction with the DnaJ-bound protein, DnaK hydrolyzes its bound ATP, resulting in the formation of a stable complex. GrpE releases ADP from DnaK; ATP binding to DnaK triggers the release of the substrate protein, thus completing the reaction cycle. Several rounds of ATP-dependent interactions between DnaJ, DnaK and GrpE are required for fully efficient folding. This Bacillus cereus (strain ATCC 10987 / NRS 248) protein is Protein GrpE.